Consider the following 669-residue polypeptide: tRNA 5-methylaminomethyl-2-thiouridine biosynthesis bifunctional protein MnmC (669 aa).

Positions 1-246 (MIKNANIHFN…KRSMLIGTLK (246 aa)) are tRNA (mnm(5)s(2)U34)-methyltransferase. The interval 271–669 (IGGGIASSCI…IVRDLIRNKI (399 aa)) is FAD-dependent cmnm(5)s(2)U34 oxidoreductase.

This sequence in the N-terminal section; belongs to the methyltransferase superfamily. tRNA (mnm(5)s(2)U34)-methyltransferase family. It in the C-terminal section; belongs to the DAO family. It depends on FAD as a cofactor.

The protein localises to the cytoplasm. It carries out the reaction 5-aminomethyl-2-thiouridine(34) in tRNA + S-adenosyl-L-methionine = 5-methylaminomethyl-2-thiouridine(34) in tRNA + S-adenosyl-L-homocysteine + H(+). Its function is as follows. Catalyzes the last two steps in the biosynthesis of 5-methylaminomethyl-2-thiouridine (mnm(5)s(2)U) at the wobble position (U34) in tRNA. Catalyzes the FAD-dependent demodification of cmnm(5)s(2)U34 to nm(5)s(2)U34, followed by the transfer of a methyl group from S-adenosyl-L-methionine to nm(5)s(2)U34, to form mnm(5)s(2)U34. In Pseudoalteromonas translucida (strain TAC 125), this protein is tRNA 5-methylaminomethyl-2-thiouridine biosynthesis bifunctional protein MnmC.